The chain runs to 281 residues: Tumor necrosis factor ligand superfamily member 10 (281 aa).

The Cytoplasmic portion of the chain corresponds to 1–17 (MAMMEVQGGPSLGQTCV). Residues 18 to 38 (LIVIFTVLLQSLCVAVTYVYF) traverse the membrane as a helical; Signal-anchor for type II membrane protein segment. Residues 39 to 281 (TNELKQMQDK…ASFFGAFLVG (243 aa)) are Extracellular-facing. Positions 122-280 (VAAHITGTRG…EASFFGAFLV (159 aa)) constitute a THD domain. Residues 124–144 (AHITGTRGRSNTLSSPNSKNE) form a disordered region. Positions 130 to 141 (RGRSNTLSSPNS) are enriched in polar residues. Cys230 contacts Zn(2+).

This sequence belongs to the tumor necrosis factor family. In terms of assembly, homotrimer. One TNFSF10 homotrimer interacts with three TNFSF10A mononers. One TNFSF10 homotrimer interacts with three TNFSF10B mononers. Post-translationally, tyrosine phosphorylated by PKDCC/VLK. As to expression, widespread; most predominant in spleen, lung and prostate.

Its subcellular location is the cell membrane. It is found in the secreted. In terms of biological role, cytokine that binds to TNFRSF10A/TRAILR1, TNFRSF10B/TRAILR2, TNFRSF10C/TRAILR3, TNFRSF10D/TRAILR4 and possibly also to TNFRSF11B/OPG. Induces apoptosis. Its activity may be modulated by binding to the decoy receptors TNFRSF10C/TRAILR3, TNFRSF10D/TRAILR4 and TNFRSF11B/OPG that cannot induce apoptosis. This Homo sapiens (Human) protein is Tumor necrosis factor ligand superfamily member 10 (TNFSF10).